Here is a 482-residue protein sequence, read N- to C-terminus: E1B 55 kDa protein (482 aa).

Positions 73-94 (VLDSGEGPSCADDRDKQEKKES) are disordered. The span at 83-94 (ADDRDKQEKKES) shows a compositional bias: basic and acidic residues. A phosphoserine mark is found at S476 and S477.

Belongs to the adenoviridae E1B 55 kDa protein family. Interacts with host PML-4 and PML-5; this interaction promotes efficient subnuclear targeting of E1B-55K to PML nuclear bodies. Interacts with E4-ORF3 protein. Interacts with E4-ORF6 protein.

Its subcellular location is the host nucleus. The protein resides in the host cytoplasm. Plays a major role to prevent cellular inhibition of viral genome replication. Assembles an SCF-like E3 ubiquitin ligase complex based on the cellular proteins ELOB, ELOC, CUL5 and RBX1, in cooperation with viral E4orf6. This viral RING-type ligase ubiquitinates cellular substrates and targets them to proteasomal degradation: TP53/p53, LIG4, MRE11-RAD50-NBS1 (MRN) complex, ITGA3, DAXX and BLM. E1B-55K probably acts as the substrate-specific adapter of the SCF-like E3 ubiquitin ligase complex. Degradation of host TP53/p53 activity is essential for preventing E1A-induced TP53 accumulation that would otherwise lead to cell apoptosis and growth arrest. E1B-55K also inactivates TP53 transcription-factor activity by binding its transactivation domain. E1B-55K also functions as a SUMO1 E3 ligase for TP53 which causes the latter to be sequestered in promyelocytic leukemia (PML) nuclear bodies thereby contributing to maximal inhibition of TP53 function. This is E1B 55 kDa protein from Homo sapiens (Human).